A 240-amino-acid chain; its full sequence is Splicing factor U2AF 35 kDa subunit (240 aa).

Residue Ala-2 is modified to N-acetylalanine. The segment at 12–40 (EKDKVNCSFYFKIGACRHGDRCSRLHNKP) adopts a C3H1-type 1 zinc-finger fold. The residue at position 39 (Lys-39) is an N6-methyllysine. 2 positions are modified to phosphoserine: Ser-61 and Ser-145. The RRM domain maps to 65 to 147 (LRCAVSDVEM…QPIHAELSPV (83 aa)). The C3H1-type 2 zinc finger occupies 149-176 (DFREACCRQYEMGECTRGGFCNFMHLKP). Residue Arg-165 is modified to Omega-N-methylarginine. The interval 183–240 (RELYGRRRKKHRSRSRSRERRSRSRDRGRGGGGGGGGGGGGRERDRRRSRDRERSGRF) is disordered. Over residues 188-208 (RRRKKHRSRSRSRERRSRSRD) the composition is skewed to basic residues. The segment covering 212–222 (GGGGGGGGGGG) has biased composition (gly residues). Basic and acidic residues predominate over residues 223–240 (GRERDRRRSRDRERSGRF).

It belongs to the splicing factor SR family. Identified in the spliceosome C complex. Heterodimer with U2AF2. Interacts (via RS domain) with PHF5A (via N-terminus). Interacts with ZRANB2. Interacts with SDE2. Interacts with SF3B1.

It localises to the nucleus. It is found in the nucleus speckle. In terms of biological role, plays a critical role in both constitutive and enhancer-dependent splicing by mediating protein-protein interactions and protein-RNA interactions required for accurate 3'-splice site selection. Recruits U2 snRNP to the branch point. Directly mediates interactions between U2AF2 and proteins bound to the enhancers and thus may function as a bridge between U2AF2 and the enhancer complex to recruit it to the adjacent intron. In Homo sapiens (Human), this protein is Splicing factor U2AF 35 kDa subunit (U2AF1).